Consider the following 282-residue polypeptide: Aquaporin NIP1-1 (282 aa).

Transmembrane regions (helical) follow at residues 46–66 (IIAE…AVTI) and 74–94 (ITFP…VYAV). Residues 103 to 105 (NPA) carry the NPA 1 motif. 3 consecutive transmembrane segments (helical) span residues 125-145 (VLAQ…MFGG), 162-182 (SLVI…GVAT), and 186-206 (AIGE…VLIA). Positions 215–217 (NPA) match the NPA 2 motif. A helical transmembrane segment spans residues 232-252 (IWVYVVGPVVGAVAGAWAYNL).

Belongs to the MIP/aquaporin (TC 1.A.8) family. NIP (TC 1.A.8.12) subfamily.

The protein resides in the membrane. Its function is as follows. Aquaporins facilitate the transport of water and small neutral solutes across cell membranes. This chain is Aquaporin NIP1-1 (NIP1-1), found in Zea mays (Maize).